Consider the following 470-residue polypeptide: Cysteine--tRNA ligase (470 aa).

Cysteine 27 is a binding site for Zn(2+). A 'HIGH' region motif is present at residues 29 to 39; sequence PTVYNFFHIGN. Zn(2+) is bound by residues cysteine 211, histidine 236, and glutamate 240. The 'KMSKS' region motif lies at 268-272; the sequence is KMSKS. Lysine 271 contributes to the ATP binding site.

It belongs to the class-I aminoacyl-tRNA synthetase family. Monomer. Zn(2+) is required as a cofactor.

It is found in the cytoplasm. The enzyme catalyses tRNA(Cys) + L-cysteine + ATP = L-cysteinyl-tRNA(Cys) + AMP + diphosphate. This Clostridium botulinum (strain Alaska E43 / Type E3) protein is Cysteine--tRNA ligase.